The primary structure comprises 275 residues: Small ribosomal subunit protein uS2 (275 aa).

The segment at 226-275 (AAAPNSASVREEEFSAEAGDEGKGRRAPAKKATEKKADAPAAAPEAPAAE) is disordered. The span at 264–275 (APAAAPEAPAAE) shows a compositional bias: low complexity.

This sequence belongs to the universal ribosomal protein uS2 family.

The polypeptide is Small ribosomal subunit protein uS2 (Xanthomonas campestris pv. campestris (strain 8004)).